Consider the following 379-residue polypeptide: Pectin lyase B (379 aa).

The first 19 residues, Met-1–Ala-19, serve as a signal peptide directing secretion. Disulfide bonds link Cys-82–Cys-101 and Cys-91–Cys-225. The N-linked (GlcNAc...) asparagine glycan is linked to Asn-128. Residue Arg-255 is part of the active site. Cys-322 and Cys-330 are disulfide-bonded.

Belongs to the polysaccharide lyase 1 family.

The protein localises to the secreted. The enzyme catalyses Eliminative cleavage of (1-&gt;4)-alpha-D-galacturonan methyl ester to give oligosaccharides with 4-deoxy-6-O-methyl-alpha-D-galact-4-enuronosyl groups at their non-reducing ends.. Pectinolytic enzymes consist of four classes of enzymes: pectin lyase, polygalacturonase, pectin methylesterase and rhamnogalacturonase. Among pectinolytic enzymes, pectin lyase is the most important in depolymerization of pectin, since it cleaves internal glycosidic bonds of highly methylated pectins. In Emericella nidulans (strain FGSC A4 / ATCC 38163 / CBS 112.46 / NRRL 194 / M139) (Aspergillus nidulans), this protein is Pectin lyase B (pelB).